A 1918-amino-acid chain; its full sequence is Diacylglycerol kinase eta (1918 aa).

Residues 1-10 (MAHLKLDTLH) show a composition bias toward basic and acidic residues. The tract at residues 1 to 37 (MAHLKLDTLHVQRSPRGSRRSSPSSGRSSACSSGSIS) is disordered. A compositionally biased stretch (low complexity) spans 20–37 (RSSPSSGRSSACSSGSIS). The 94-residue stretch at 82–175 (AIIKEGFLLK…WLGGLKTATA (94 aa)) folds into the PH domain. 2 consecutive Phorbol-ester/DAG-type zinc fingers follow at residues 195-245 (HHHW…IANC) and 268-319 (PHQW…AVAC). The DAGKc domain maps to 350–486 (GNFSPLLVFV…DRWSIMVFEK (137 aa)). Disordered stretches follow at residues 783–805 (GANIDDAGNRLSPCSDGGENTPT), 1017–1067 (TTLC…DDNP), 1177–1212 (PNTILTTSTSPTKKSGHGQDISVVVRPPTPLRGDSI), and 1380–1399 (ERDKEERGGKDKDKTPTEEA). Positions 1177-1189 (PNTILTTSTSPTK) are enriched in polar residues. One can recognise an SAM domain in the interval 1855–1918 (WSVNEVVTWL…LQAIKDLSEN (64 aa)).

This sequence belongs to the eukaryotic diacylglycerol kinase family.

It localises to the cytoplasm. It catalyses the reaction a 1,2-diacyl-sn-glycerol + ATP = a 1,2-diacyl-sn-glycero-3-phosphate + ADP + H(+). Phosphorylates diacylglycerol (DAG) to generate phosphatidic acid (PA). In Drosophila erecta (Fruit fly), this protein is Diacylglycerol kinase eta.